The sequence spans 474 residues: Ribulose bisphosphate carboxylase large chain (474 aa).

Residues Asn-122 and Thr-172 each contribute to the substrate site. The active-site Proton acceptor is Lys-174. Substrate is bound at residue Lys-176. Residues Lys-200, Asp-202, and Glu-203 each coordinate Mg(2+). An N6-carboxylysine modification is found at Lys-200. His-293 acts as the Proton acceptor in catalysis. Arg-294, His-326, and Ser-378 together coordinate substrate.

This sequence belongs to the RuBisCO large chain family. Type I subfamily. Heterohexadecamer of 8 large chains and 8 small chains; disulfide-linked. The disulfide link is formed within the large subunit homodimers. It depends on Mg(2+) as a cofactor. The disulfide bond which can form in the large chain dimeric partners within the hexadecamer appears to be associated with oxidative stress and protein turnover.

The protein resides in the carboxysome. It carries out the reaction 2 (2R)-3-phosphoglycerate + 2 H(+) = D-ribulose 1,5-bisphosphate + CO2 + H2O. The catalysed reaction is D-ribulose 1,5-bisphosphate + O2 = 2-phosphoglycolate + (2R)-3-phosphoglycerate + 2 H(+). In terms of biological role, ruBisCO catalyzes two reactions: the carboxylation of D-ribulose 1,5-bisphosphate, the primary event in carbon dioxide fixation, as well as the oxidative fragmentation of the pentose substrate in the photorespiration process. Both reactions occur simultaneously and in competition at the same active site. In Gloeobacter violaceus (strain ATCC 29082 / PCC 7421), this protein is Ribulose bisphosphate carboxylase large chain.